The primary structure comprises 290 residues: Plasma membrane ascorbate-dependent reductase CYBRD1 (290 aa).

The Cytoplasmic portion of the chain corresponds to 1–7; it reads MAMEGYR. The helical transmembrane segment at 8-32 threads the bilayer; that stretch reads GFLGLLVSALLVGFLSVIFVLIWVL. The region spanning 15-220 is the Cytochrome b561 domain; it reads SALLVGFLSV…FGALIFWIVT (206 aa). Residues 33-47 lie on the Extracellular side of the membrane; it reads HFREGLGWNGSGLEF. The helical transmembrane segment at 48–69 threads the bilayer; the sequence is NWHPVLAVTGFVFIQGIAIIVY. Residues H50, R70, and K79 each coordinate heme b. Over 70-78 the chain is Cytoplasmic; sequence RLPWTWKCS. L-ascorbate contacts are provided by K79 and K83. The helical transmembrane segment at 79-105 threads the bilayer; it reads KLLMKSIHAGLNAVAAILAIISVVAVF. H86 contributes to the heme b binding site. Topologically, residues 106-118 are extracellular; it reads EYHNVQKVPHMYS. Residue H108 coordinates Fe(3+). Heme b is bound by residues 115–118 and H120; that span reads HMYS. The helical transmembrane segment at 119-144 threads the bilayer; that stretch reads LHSWVGLTALILYIQQLVVGFFVFLL. Topologically, residues 145–151 are cytoplasmic; sequence PWAPPSL. L-ascorbate is bound at residue R152. Residues 152 to 179 traverse the membrane as a helical segment; the sequence is RAIVMPIHVYSGLLLFGTVIATVLMGVT. 2 residues coordinate heme b: H159 and E180. Residues 180 to 197 lie on the Extracellular side of the membrane; the sequence is EKLFFVLKHPSYHSFPPE. The helical transmembrane segment at 198–222 threads the bilayer; sequence GVFTNTLGLLILVFGALIFWIVTRP. Residues 223-290 are Cytoplasmic-facing; the sequence is QWKRPREPGS…LADSGQRSTM (68 aa). K225 contacts heme b. S232 carries the post-translational modification Phosphoserine. The segment at 257–290 is disordered; that stretch reads SMDAADPADAESSSEGAARKRTLGLADSGQRSTM. Over residues 260 to 272 the composition is skewed to low complexity; it reads AADPADAESSSEG. T289 carries the phosphothreonine modification.

As to quaternary structure, homodimer. Heme b is required as a cofactor. Highly expressed in the brush-border membrane of duodenal enterocytes (at protein level). Also expressed in liver and spleen.

The protein resides in the cell membrane. Its subcellular location is the apical cell membrane. The enzyme catalyses Fe(3+)(out) + L-ascorbate(in) = monodehydro-L-ascorbate radical(in) + Fe(2+)(out) + H(+). It carries out the reaction Cu(2+)(out) + L-ascorbate(in) = Cu(+)(out) + monodehydro-L-ascorbate radical(in) + H(+). It catalyses the reaction monodehydro-L-ascorbate radical(out) + L-ascorbate(in) = monodehydro-L-ascorbate radical(in) + L-ascorbate(out). In terms of biological role, plasma membrane reductase that uses cytoplasmic ascorbate as an electron donor to reduce extracellular Fe(3+) into Fe(2+). Probably functions in dietary iron absorption at the brush border of duodenal enterocytes by producing Fe(2+), the divalent form of iron that can be transported into enterocytes. It is also able to reduce extracellular monodehydro-L-ascorbate and may be involved in extracellular ascorbate regeneration by erythrocytes in blood. May also act as a ferrireductase in airway epithelial cells. May also function as a cupric transmembrane reductase. This is Plasma membrane ascorbate-dependent reductase CYBRD1 from Mus musculus (Mouse).